A 702-amino-acid polypeptide reads, in one-letter code: MPQFQRTLVTTALPYANGPVHLGHLAGVYLPADLFVRYKRLQGEDVIHIGGSDEHGVPITITAEKEGITPRDVVDRYHSMNLEAFKRCGISFDYYGRTSSELHHKTAQEFFLEIEGKGIFERKTEKLFYDASACRFLSDRYVTGTCPICGNTEANGDQCEQCGTHLSPLELINPKSKLSDATPELRETLHWYFPLGRFQKQLEAFVGSHDDDWRANVLNYTRTWLNQGLNDRAITRDLSWGIKVPLQDPEAEGKVLYVWFDAVLGYVSFAREWAVLQGSPDRWKEYWQNPDSRVVNFIGKDNVVFHTLMLPAILMAWNEGRSDSIYNLADNVPASEFMNFEGRKFSKSRNYAVYLGEFLDKFPAETLRYSIAMNYPENKDSDFSWTDFQNRTNGELADTLGNFIKRSVDFTNSRFEGIVPHACSRQEWDSLGINWADTIHQLDEAFEGFHFREAVSAAMDIARAANRFLTGAEPWKAIKEDRDGAARTMALSLNLCHALSIALYPVLPETANRIHSMLGFQGTIESLFKRGVPLYKSLTEPALPMGHSLSGESEILFAKIDDAMIEPELRNIERLLAEAQAREAGATAEKMEFKPLIEFDDFQKVDLRAASVISAEKVKKASKLLKLQLQVGSTTRQVLAGVAEHYSPEEMVGKNVLLVANLAPRTIRGEVSEGMLLAVEGDAGKLYMVEPQGEKINGSSVQ.

The short motif at 14-24 (PYANGPVHLGH) is the 'HIGH' region element. Zn(2+) contacts are provided by C146, C149, C159, and C162. The 'KMSKS' region signature appears at 344 to 348 (KFSKS). Residue K347 participates in ATP binding. A tRNA-binding domain is found at 601-702 (DFQKVDLRAA…GEKINGSSVQ (102 aa)).

It belongs to the class-I aminoacyl-tRNA synthetase family. MetG type 1 subfamily. In terms of assembly, homodimer. Zn(2+) is required as a cofactor.

The protein localises to the cytoplasm. It carries out the reaction tRNA(Met) + L-methionine + ATP = L-methionyl-tRNA(Met) + AMP + diphosphate. In terms of biological role, is required not only for elongation of protein synthesis but also for the initiation of all mRNA translation through initiator tRNA(fMet) aminoacylation. The protein is Methionine--tRNA ligase of Chlorobium phaeovibrioides (strain DSM 265 / 1930) (Prosthecochloris vibrioformis (strain DSM 265)).